The sequence spans 429 residues: D-galactonate dehydratase family member Caci_4410 (429 aa).

Positions 1 to 22 (MTDANHLLDPSGALPQTRPPWT) are disordered. Residue D233 participates in Mg(2+) binding. H235 serves as a coordination point for D-arabinonate. 2 residues coordinate Mg(2+): E259 and E285. Residues E285, R306, H335, and E362 each coordinate D-arabinonate.

This sequence belongs to the mandelate racemase/muconate lactonizing enzyme family. GalD subfamily.

Functionally, has no detectable activity with D-mannonate and with a panel of 70 other acid sugars (in vitro), in spite of the conservation of the residues that are expected to be important for catalytic activity and cofactor binding. May have evolved a divergent function. The chain is D-galactonate dehydratase family member Caci_4410 from Catenulispora acidiphila (strain DSM 44928 / JCM 14897 / NBRC 102108 / NRRL B-24433 / ID139908).